The chain runs to 647 residues: DNA mismatch repair protein MutL (647 aa).

The protein belongs to the DNA mismatch repair MutL/HexB family.

Functionally, this protein is involved in the repair of mismatches in DNA. It is required for dam-dependent methyl-directed DNA mismatch repair. May act as a 'molecular matchmaker', a protein that promotes the formation of a stable complex between two or more DNA-binding proteins in an ATP-dependent manner without itself being part of a final effector complex. This Koribacter versatilis (strain Ellin345) protein is DNA mismatch repair protein MutL.